Reading from the N-terminus, the 579-residue chain is Keratinocyte proline-rich protein (579 aa).

Ser-394 carries the phosphoserine modification. Residues Glu-526–Phe-579 are disordered. The segment covering Phe-551 to Gly-561 has biased composition (basic and acidic residues).

As to expression, expressed in the upper layer of epidermis and psoriasis (at protein level). Expressed in the upper layer of epidermis and psoriasis.

The protein localises to the cytoplasm. The chain is Keratinocyte proline-rich protein (KPRP) from Homo sapiens (Human).